A 352-amino-acid chain; its full sequence is 2'-dehydrokanamycin reductase (352 aa).

Belongs to the NAD(P)-dependent epimerase/dehydratase family.

It catalyses the reaction 2'-dehydrokanamycin A + NADPH + H(+) = kanamycin A + NADP(+). It participates in antibiotic biosynthesis; kanamycin biosynthesis. Its function is as follows. Mediates the conversion of 2'-dehydrokanamycin A into kanamycin A. The protein is 2'-dehydrokanamycin reductase (kanK) of Streptomyces kanamyceticus.